We begin with the raw amino-acid sequence, 436 residues long: Tol-Pal system protein TolB (436 aa).

Residues 1–28 (MMKCSFFRAILVAVGLMAAAVVATPANA) form the signal peptide.

This sequence belongs to the TolB family. The Tol-Pal system is composed of five core proteins: the inner membrane proteins TolA, TolQ and TolR, the periplasmic protein TolB and the outer membrane protein Pal. They form a network linking the inner and outer membranes and the peptidoglycan layer.

It localises to the periplasm. Part of the Tol-Pal system, which plays a role in outer membrane invagination during cell division and is important for maintaining outer membrane integrity. This Rhizobium etli (strain CIAT 652) protein is Tol-Pal system protein TolB.